The chain runs to 248 residues: PACRG-like protein (248 aa).

M1 is subject to N-acetylmethionine. The span at 1 to 29 (MQKSEGSGGTQLKNRATGNYDQRTSSSTQ) shows a compositional bias: polar residues. The interval 1–71 (MQKSEGSGGT…LNPKTINPFG (71 aa)) is disordered. Low complexity predominate over residues 39–49 (SKSSLSTSSPE). S47 carries the post-translational modification Phosphoserine.

This chain is PACRG-like protein (PACRGL), found in Homo sapiens (Human).